An 876-amino-acid polypeptide reads, in one-letter code: Alanine--tRNA ligase (876 aa).

Positions 564, 568, 666, and 670 each coordinate Zn(2+).

The protein belongs to the class-II aminoacyl-tRNA synthetase family. Homotetramer. The cofactor is Zn(2+).

The protein localises to the cytoplasm. The enzyme catalyses tRNA(Ala) + L-alanine + ATP = L-alanyl-tRNA(Ala) + AMP + diphosphate. Its function is as follows. Catalyzes the attachment of alanine to tRNA(Ala) in a two-step reaction: alanine is first activated by ATP to form Ala-AMP and then transferred to the acceptor end of tRNA(Ala). Also edits incorrectly charged Ser-tRNA(Ala) and Gly-tRNA(Ala) via its editing domain. The sequence is that of Alanine--tRNA ligase from Salmonella paratyphi B (strain ATCC BAA-1250 / SPB7).